A 230-amino-acid polypeptide reads, in one-letter code: Large ribosomal subunit protein uL1 (230 aa).

The protein belongs to the universal ribosomal protein uL1 family. As to quaternary structure, part of the 50S ribosomal subunit.

Binds directly to 23S rRNA. The L1 stalk is quite mobile in the ribosome, and is involved in E site tRNA release. In terms of biological role, protein L1 is also a translational repressor protein, it controls the translation of the L11 operon by binding to its mRNA. The protein is Large ribosomal subunit protein uL1 of Ligilactobacillus salivarius (strain UCC118) (Lactobacillus salivarius).